The sequence spans 426 residues: D-tagatose-1,6-bisphosphate aldolase subunit KbaZ (426 aa).

This sequence belongs to the GatZ/KbaZ family. KbaZ subfamily. Forms a complex with KbaY.

It participates in carbohydrate metabolism; D-tagatose 6-phosphate degradation; D-glyceraldehyde 3-phosphate and glycerone phosphate from D-tagatose 6-phosphate: step 2/2. Its function is as follows. Component of the tagatose-1,6-bisphosphate aldolase KbaYZ that is required for full activity and stability of the Y subunit. Could have a chaperone-like function for the proper and stable folding of KbaY. When expressed alone, KbaZ does not show any aldolase activity. This Escherichia coli (strain 55989 / EAEC) protein is D-tagatose-1,6-bisphosphate aldolase subunit KbaZ.